The chain runs to 916 residues: Isoleucine--tRNA ligase (916 aa).

The 'HIGH' region motif lies at 57–67 (PYANGNLHMGH). E554 serves as a coordination point for L-isoleucyl-5'-AMP. Residues 595–599 (KMSKS) carry the 'KMSKS' region motif. K598 contributes to the ATP binding site. Positions 885, 888, 905, and 908 each coordinate Zn(2+).

Belongs to the class-I aminoacyl-tRNA synthetase family. IleS type 1 subfamily. Monomer. Requires Zn(2+) as cofactor.

It is found in the cytoplasm. The catalysed reaction is tRNA(Ile) + L-isoleucine + ATP = L-isoleucyl-tRNA(Ile) + AMP + diphosphate. Functionally, catalyzes the attachment of isoleucine to tRNA(Ile). As IleRS can inadvertently accommodate and process structurally similar amino acids such as valine, to avoid such errors it has two additional distinct tRNA(Ile)-dependent editing activities. One activity is designated as 'pretransfer' editing and involves the hydrolysis of activated Val-AMP. The other activity is designated 'posttransfer' editing and involves deacylation of mischarged Val-tRNA(Ile). This Staphylococcus epidermidis (strain ATCC 35984 / DSM 28319 / BCRC 17069 / CCUG 31568 / BM 3577 / RP62A) protein is Isoleucine--tRNA ligase (ileS).